The chain runs to 165 residues: Pro-MCH (165 aa).

An N-terminal signal peptide occupies residues 1–21 (MAKMSLSSYMLMLAFSLFSHG). The segment covering 69-82 (DESGFMKDDDDKTT) has biased composition (basic and acidic residues). Residues 69–89 (DESGFMKDDDDKTTKNTGSKQ) form a disordered region. Isoleucine 143 bears the Isoleucine amide mark. A disulfide bridge connects residues cysteine 153 and cysteine 162.

Belongs to the melanin-concentrating hormone family. Post-translationally, pro-MCH is processed differentially in the brain and in peripheral organs producing two neuropeptides; NEI and MCH. A third peptide, NGE, may also be produced. Preferential processing in neurons by prohormone convertase 2 (PC2) generates NEI. MCH is generated in neurons of the lateral hypothalmic area by several prohormone convertases including PC1/3, PC2 and PC5/6. As to expression, MCH is present in all regions of the brain and in neurointermediate lobe of the pituarity gland, with highest concentrations in the hypothalamus. Also expressed to a much lesser extent in stomach, lamina propria of both duodenum and colon, ovary, thymus, pancreas, adrenal gland and testis (spermatogonia, early spermatocytes and Sertoli cells). Weak expression in heart and lung. The other peptides are expressed at least in Sertoli cells, nei being also expressed in brain, stomach and proximal duodenum. In brain exclusively mature mch and nei peptides are present. In peripheral tissues a large product, encompassing the NEI and MCH domains of the precursor, is found predominantly. At low levels fully processed MCH and NEI peptides are present in gut. No expression in peripheral blood.

It localises to the secreted. In terms of biological role, MCH inhibits ACTH secretion at the end of the light on period which corresponds to the peak of the circadian rhythm in ACTH. Inhibits also stress induced ACTH release during the light off period of the cycle. Involved as a neurotransmitter or neuromodulator in a broad array of neuronal functions. Stimulates sexual behavior when injected into the ventromedial nucleus, this effect is antagonized by NEI. In the medial preoptic area, stimulates anxiety and sexual behavior. Antagonizes inhibitory effect of melanotropin alpha on exploration behavior. Its function is as follows. NEI can influence differentiation of neuronal processes in brain neurons. Affects the content of neurofilament protein in neuritogenesis (in vitro). May also be a neuromodulatory factor. In behavioral tests, it stimulates exploration and anxiety when injected into the ventromedial nucleus. Also stimulates grooming, locomotion and rearing. May antagonize the inhibitory effect of mch on ACTH release. Reduces dopamine and dopac release in the ventromedial nucleus. The polypeptide is Pro-MCH (Pmch) (Rattus norvegicus (Rat)).